The primary structure comprises 939 residues: Valine--tRNA ligase (939 aa).

A 'HIGH' region motif is present at residues proline 47–histidine 57. The 'KMSKS' region signature appears at lysine 563–serine 567. Lysine 566 is a binding site for ATP. Positions glutamate 874 to leucine 939 form a coiled coil.

Belongs to the class-I aminoacyl-tRNA synthetase family. ValS type 1 subfamily. In terms of assembly, monomer.

It localises to the cytoplasm. The catalysed reaction is tRNA(Val) + L-valine + ATP = L-valyl-tRNA(Val) + AMP + diphosphate. Its function is as follows. Catalyzes the attachment of valine to tRNA(Val). As ValRS can inadvertently accommodate and process structurally similar amino acids such as threonine, to avoid such errors, it has a 'posttransfer' editing activity that hydrolyzes mischarged Thr-tRNA(Val) in a tRNA-dependent manner. The chain is Valine--tRNA ligase from Chlamydia trachomatis serovar L2 (strain ATCC VR-902B / DSM 19102 / 434/Bu).